Consider the following 255-residue polypeptide: Glioma pathogenesis-related protein 1 (255 aa).

The N-terminal stretch at 1-17 (MQVILAVIVWMASSVSS) is a signal peptide. The region spanning 39-164 (QVHNQLRSKV…PNGANFICDY (126 aa)) is the SCP domain. A helical membrane pass occupies residues 224–244 (SLFLIAKSVLLLLSVIITIWV).

This sequence belongs to the CRISP family.

It is found in the membrane. The sequence is that of Glioma pathogenesis-related protein 1 (Glipr1) from Mus musculus (Mouse).